A 252-amino-acid chain; its full sequence is MKVIFNADDFGLTRGVNDGIVHAHLDGVVRSTTMMVGMPAEAHAVELANHLPELKVGLHLRFTAGRPLTEEQNLVGRDGDFTPYGQFWHRRDYDPIAIHNEAVAQVEYFLALGLNLSHIDSHHHAHTHPQFEPVIYDIARTYQVPLRSTGLAGEEEFGCRYHFTDHFYDKRVGHDSLIQHLLTLKEHYDVVEVMCHPAIVDTALEACSGYAKQRELELAILTSDELKLSLRKHDIEVTDYSELIFAPLHSCV.

Residues His59 and His122 each contribute to the Mg(2+) site.

Belongs to the YdjC deacetylase family. As to quaternary structure, homodimer. The cofactor is Mg(2+).

Probably catalyzes the deacetylation of acetylated carbohydrates an important step in the degradation of oligosaccharides. This Vibrio vulnificus (strain CMCP6) protein is Carbohydrate deacetylase.